The sequence spans 310 residues: Tyrosine recombinase XerC (310 aa).

Positions 1 to 92 (MDELIKEFDR…SLRAFFKYLH (92 aa)) constitute a Core-binding (CB) domain. One can recognise a Tyr recombinase domain in the interval 113-300 (YIPAVLSVDE…SVNRLMAVYD (188 aa)). Catalysis depends on residues arginine 153, lysine 177, histidine 252, arginine 255, and histidine 278. Tyrosine 287 serves as the catalytic O-(3'-phospho-DNA)-tyrosine intermediate.

This sequence belongs to the 'phage' integrase family. XerC subfamily. Forms a cyclic heterotetrameric complex composed of two molecules of XerC and two molecules of XerD.

Its subcellular location is the cytoplasm. Its function is as follows. Site-specific tyrosine recombinase, which acts by catalyzing the cutting and rejoining of the recombining DNA molecules. The XerC-XerD complex is essential to convert dimers of the bacterial chromosome into monomers to permit their segregation at cell division. It also contributes to the segregational stability of plasmids. The chain is Tyrosine recombinase XerC from Syntrophus aciditrophicus (strain SB).